Reading from the N-terminus, the 1097-residue chain is Error-prone DNA polymerase (1097 aa).

The tract at residues 1039-1097 is disordered; sequence PTGRGDEFAHGSPGGGDSRDRSPPKPRDIVVPLCRARHKGIDPEPETMPSAFPKPRDFR. The span at 1055–1066 shows a compositional bias: basic and acidic residues; sequence DSRDRSPPKPRD.

Belongs to the DNA polymerase type-C family. DnaE2 subfamily.

The protein localises to the cytoplasm. The enzyme catalyses DNA(n) + a 2'-deoxyribonucleoside 5'-triphosphate = DNA(n+1) + diphosphate. Its function is as follows. DNA polymerase involved in damage-induced mutagenesis and translesion synthesis (TLS). It is not the major replicative DNA polymerase. The sequence is that of Error-prone DNA polymerase from Allorhizobium ampelinum (strain ATCC BAA-846 / DSM 112012 / S4) (Agrobacterium vitis (strain S4)).